Here is a 495-residue protein sequence, read N- to C-terminus: Transcription termination/antitermination protein NusA (495 aa).

Residues 135-200 (GEIITGVVKK…RGAQLFVTRS (66 aa)) form the S1 motif domain. One can recognise a KH domain in the interval 302–368 (KHTMDIAVEA…FTKYLDIDED (67 aa)). 2 consecutive repeat copies span residues 364–414 (DIDE…KNAL) and 439–489 (GVDR…RNIC). The 2 X 51 AA approximate repeats stretch occupies residues 364–489 (DIDEDFATVL…ALIMAARNIC (126 aa)).

The protein belongs to the NusA family. Monomer. Binds directly to the core enzyme of the DNA-dependent RNA polymerase and to nascent RNA.

The protein resides in the cytoplasm. In terms of biological role, participates in both transcription termination and antitermination. In Shigella flexneri, this protein is Transcription termination/antitermination protein NusA.